Here is a 238-residue protein sequence, read N- to C-terminus: Riboflavin-binding protein (238 aa).

An N-terminal signal peptide occupies residues 1–17 (MLRFAITLFAVITSSTC). Glutamine 18 bears the Pyrrolidone carboxylic acid mark. Cystine bridges form between cysteine 22-cysteine 49, cysteine 41-cysteine 90, cysteine 50-cysteine 94, cysteine 74-cysteine 155, cysteine 81-cysteine 127, cysteine 116-cysteine 186, cysteine 120-cysteine 169, cysteine 133-cysteine 151, and cysteine 184-cysteine 219. Asparagine 53 carries an N-linked (GlcNAc...) asparagine glycan. Asparagine 164 carries N-linked (GlcNAc...) asparagine glycosylation. 8 positions are modified to phosphoserine: serine 204, serine 205, serine 208, serine 209, serine 210, serine 212, serine 213, and serine 214.

This sequence belongs to the folate receptor family. Post-translationally, plasma and yolk RBPS have the same carbohydrate components, whereas egg-white RBP has a different, ovomucoid-type carbohydrate chain. In terms of processing, plasma RBP has the same C-terminal sequence as the egg-white RBP, which suggests that the C-terminal residues are cleaved off upon incorporation into the oocyte. In terms of tissue distribution, yolk RBP is synthesized in the liver; egg-white RBP is synthesized in the oviduct.

Its function is as follows. Required for the transport of riboflavin to the developing oocyte. The sequence is that of Riboflavin-binding protein from Gallus gallus (Chicken).